The chain runs to 118 residues: V-type proton ATPase subunit G 3 (118 aa).

Polar residues predominate over residues 1-12; that stretch reads MASQSQGIQQLL. Positions 1-37 are disordered; it reads MASQSQGIQQLLQAEKRAKDKLEEAKKRKNKRLRQAK. Residues 3 to 53 are a coiled coil; sequence SQSQGIQQLLQAEKRAKDKLEEAKKRKNKRLRQAKEEATADIDQYRLKREG. Basic and acidic residues predominate over residues 14 to 26; the sequence is AEKRAKDKLEEAK.

It belongs to the V-ATPase G subunit family. In terms of assembly, V-ATPase is a heteromultimeric enzyme made up of two complexes: the ATP-hydrolytic V1 complex and the proton translocation V0 complex. The V1 complex consists of three catalytic AB heterodimers that form a heterohexamer, three peripheral stalks each consisting of EG heterodimers, one central rotor including subunits D and F, and the regulatory subunits C and H. The proton translocation complex V0 consists of the proton transport subunit a, a ring of proteolipid subunits c9c'', rotary subunit d, subunits e and f, and two accessory subunits.

Functionally, subunit of the V1 complex of vacuolar(H+)-ATPase (V-ATPase), a multisubunit enzyme composed of a peripheral complex (V1) that hydrolyzes ATP and a membrane integral complex (V0) that translocates protons. V-ATPase is responsible for acidifying and maintaining the pH of intracellular compartments and in some cell types, is targeted to the plasma membrane, where it is responsible for acidifying the extracellular environment. In Xenopus tropicalis (Western clawed frog), this protein is V-type proton ATPase subunit G 3 (atp6v1g3).